The primary structure comprises 306 residues: Eukaryotic translation initiation factor 2 subunit alpha (306 aa).

In terms of domain architecture, S1 motif spans 17-88; the sequence is DELVVVNVRQ…EKGYIDLSKR (72 aa). Serine 52 carries the phosphoserine modification. Threonine 179 is modified (phosphothreonine). Phosphoserine is present on residues serine 273, serine 295, serine 303, and serine 305.

Belongs to the eIF-2-alpha family. Eukaryotic translation initiation factor 2 eIF2 is a heterotrimeric complex composed of an alpha, a beta and a gamma subunit.

The protein resides in the cytoplasm. Its subcellular location is the cytosol. In terms of biological role, eIF-2 functions in the early steps of protein synthesis by forming a ternary complex with GTP and initiator tRNA. This complex binds to a 40S ribosomal subunit, followed by mRNA binding to form a 43S pre-initiation complex. Junction of the 60S ribosomal subunit to form the 80S initiation complex is preceded by hydrolysis of the GTP bound to eIF-2 and release of an eIF-2-GDP binary complex. In order for eIF-2 to recycle and catalyze another round of initiation, the GDP bound to eIF-2 must exchange with GTP by way of a reaction catalyzed by eIF2B. The protein is Eukaryotic translation initiation factor 2 subunit alpha (tif211) of Schizosaccharomyces pombe (strain 972 / ATCC 24843) (Fission yeast).